The primary structure comprises 417 residues: Serine hydroxymethyltransferase (417 aa).

(6S)-5,6,7,8-tetrahydrofolate-binding positions include leucine 122 and 126–128 (GHL). The residue at position 230 (lysine 230) is an N6-(pyridoxal phosphate)lysine. Position 355–357 (355–357 (SPF)) interacts with (6S)-5,6,7,8-tetrahydrofolate.

It belongs to the SHMT family. In terms of assembly, homodimer. Requires pyridoxal 5'-phosphate as cofactor.

It is found in the cytoplasm. The enzyme catalyses (6R)-5,10-methylene-5,6,7,8-tetrahydrofolate + glycine + H2O = (6S)-5,6,7,8-tetrahydrofolate + L-serine. It functions in the pathway one-carbon metabolism; tetrahydrofolate interconversion. The protein operates within amino-acid biosynthesis; glycine biosynthesis; glycine from L-serine: step 1/1. Catalyzes the reversible interconversion of serine and glycine with tetrahydrofolate (THF) serving as the one-carbon carrier. This reaction serves as the major source of one-carbon groups required for the biosynthesis of purines, thymidylate, methionine, and other important biomolecules. Also exhibits THF-independent aldolase activity toward beta-hydroxyamino acids, producing glycine and aldehydes, via a retro-aldol mechanism. The sequence is that of Serine hydroxymethyltransferase from Francisella tularensis subsp. mediasiatica (strain FSC147).